A 128-amino-acid polypeptide reads, in one-letter code: Ribonuclease pancreatic B (128 aa).

Positions alanine 1–asparagine 21 are disordered. Lysine 7 and arginine 10 together coordinate substrate. Histidine 12 serves as the catalytic Proton acceptor. N-linked (GlcNAc...) asparagine glycans are attached at residues asparagine 21 and asparagine 34. Intrachain disulfides connect cysteine 26–cysteine 84, cysteine 40–cysteine 95, cysteine 58–cysteine 110, and cysteine 65–cysteine 72. Residues lysine 41–threonine 45, lysine 66, and arginine 85 each bind substrate. The Proton donor role is filled by histidine 119.

It belongs to the pancreatic ribonuclease family. As to expression, pancreas.

The protein localises to the secreted. It catalyses the reaction an [RNA] containing cytidine + H2O = an [RNA]-3'-cytidine-3'-phosphate + a 5'-hydroxy-ribonucleotide-3'-[RNA].. The enzyme catalyses an [RNA] containing uridine + H2O = an [RNA]-3'-uridine-3'-phosphate + a 5'-hydroxy-ribonucleotide-3'-[RNA].. This is Ribonuclease pancreatic B from Cavia porcellus (Guinea pig).